Reading from the N-terminus, the 330-residue chain is Adenylate isopentenyltransferase 5, chloroplastic (330 aa).

A chloroplast-targeting transit peptide spans 1–39; sequence MKPCMTALRQVIQPLSLNFQGNMVDVPFFRRKDKVVFVM. 40 to 47 is a binding site for ATP; sequence GATGTGKS.

Belongs to the IPP transferase family. In terms of tissue distribution, expressed in root primordia, columella root caps, upper part of young inflorescences, and fruit abscission zones.

The protein resides in the plastid. It localises to the chloroplast. It catalyses the reaction dimethylallyl diphosphate + ADP = N(6)-(dimethylallyl)adenosine 5'-diphosphate + diphosphate. The enzyme catalyses dimethylallyl diphosphate + ATP = N(6)-(dimethylallyl)adenosine 5'-triphosphate + diphosphate. Involved in cytokinin biosynthesis. Catalyzes the transfer of an isopentenyl group from dimethylallyl diphosphate (DMAPP) to ATP and ADP. This Arabidopsis thaliana (Mouse-ear cress) protein is Adenylate isopentenyltransferase 5, chloroplastic (IPT5).